Reading from the N-terminus, the 278-residue chain is S-formylglutathione hydrolase YeiG (278 aa).

Active-site charge relay system residues include Ser145, Asp223, and His256.

This sequence belongs to the esterase D family.

It catalyses the reaction S-formylglutathione + H2O = formate + glutathione + H(+). Serine hydrolase involved in the detoxification of formaldehyde. Hydrolyzes S-formylglutathione to glutathione and formate. The sequence is that of S-formylglutathione hydrolase YeiG (yeiG) from Shigella boydii serotype 4 (strain Sb227).